Consider the following 316-residue polypeptide: Apolipoprotein E (316 aa).

Residues 1–18 (MKVLWVALVITLLAGCQA) form the signal peptide. Repeat copies occupy residues 79 to 100 (VLMD…GQLG), 101 to 122 (PIAQ…ARLA), 123 to 144 (SDME…AMMG), 145 to 166 (QTTD…KRLL), 167 to 188 (RDAE…EGSE), 189 to 210 (RSVS…VRAA), 211 to 232 (TVGT…QKLR), and 233 to 254 (GRME…EQLE). Residues 79-254 (VLMDETMKEV…HLEEMREQLE (176 aa)) form an 8 X 22 AA approximate tandem repeats region. M142 bears the Methionine sulfoxide mark. The LDL and other lipoprotein receptors binding stretch occupies residues 157 to 167 (HLRKLRKRLLR). 161-164 (LRKR) provides a ligand contact to heparin. Residues 209-289 (AATVGTLASQ…SWFEPLVEDM (81 aa)) are lipid-binding and lipoprotein association. 228–235 (HQKLRGRM) contributes to the heparin binding site. Residues 265 to 316 (SQMRLQAEAFQARLKSWFEPLVEDMQRQWAGLVEKVQLAMATSPTSAPIENS) form a homooligomerization region. The tract at residues 277–289 (RLKSWFEPLVEDM) is specificity for association with VLDL.

Belongs to the apolipoprotein A1/A4/E family. As to quaternary structure, homotetramer. May interact with ABCA1; functionally associated with ABCA1 in the biogenesis of HDLs. May interact with APP/A4 amyloid-beta peptide; the interaction is extremely stable in vitro but its physiological significance is unclear. May interact with MAPT. May interact with MAP2. In the cerebrospinal fluid, interacts with secreted SORL1. Interacts with PMEL; this allows the loading of PMEL luminal fragment on ILVs to induce fibril nucleation. Post-translationally, APOE exists as multiple glycosylated and sialylated glycoforms within cells and in plasma. The extent of glycosylation and sialylation are tissue and context specific. In terms of processing, glycated in plasma VLDL. Phosphorylated by FAM20C in the extracellular medium.

It is found in the secreted. The protein localises to the extracellular space. The protein resides in the extracellular matrix. Its subcellular location is the extracellular vesicle. It localises to the endosome. It is found in the multivesicular body. APOE is an apolipoprotein, a protein associating with lipid particles, that mainly functions in lipoprotein-mediated lipid transport between organs via the plasma and interstitial fluids. APOE is a core component of plasma lipoproteins and is involved in their production, conversion and clearance. Apolipoproteins are amphipathic molecules that interact both with lipids of the lipoprotein particle core and the aqueous environment of the plasma. As such, APOE associates with chylomicrons, chylomicron remnants, very low density lipoproteins (VLDL) and intermediate density lipoproteins (IDL) but shows a preferential binding to high-density lipoproteins (HDL). It also binds a wide range of cellular receptors including the LDL receptor/LDLR and the very low-density lipoprotein receptor/VLDLR that mediate the cellular uptake of the APOE-containing lipoprotein particles. Finally, APOE also has a heparin-binding activity and binds heparan-sulfate proteoglycans on the surface of cells, a property that supports the capture and the receptor-mediated uptake of APOE-containing lipoproteins by cells. The sequence is that of Apolipoprotein E (APOE) from Orcinus orca (Killer whale).